A 127-amino-acid polypeptide reads, in one-letter code: Protein ApaG (127 aa).

Positions 3-127 constitute an ApaG domain; the sequence is KSETYRIEVE…FMLAMPRVLH (125 aa).

This chain is Protein ApaG, found in Azoarcus sp. (strain BH72).